A 501-amino-acid chain; its full sequence is MATVIPGDLSEVRDTQKVPSGKRKRGETKPRKNFPCQLCDKAFNSVEKLKVHSYSHTGERPYKCTQQDCTKAFVSKYKLLRHMATHSPEKTHKCNYCEKMFHRKDHLKNHLHTHNPNKEAFKCEECGKNYNTKLGFKRHLALHAATSGDLTCKVCLQTFESTGVLLEHLKTHAGKSSGGVKEKKHQCEHCDRRFYTRKDVRRHMVVHTGRKDFLCQYCAQRFGRKDHLTRHMKKSHNQELLKVKTEPMDLLDPFTCNVSVPIKDELLPVMSLPSSELTSKPFTNTLQLNLYNTQIQSMQSSASAHQMVATSLPLGMPCPIDMESVHPSHQLSLKYPLSSTSYAVSMPEKEQPLKGEIESYLMELQSGMPSSSQDSQASSSKLGLDPQVGPLDDGSGEVSLSKGSVPISEPLNTPSLDFSQLFNFIPVNGPPYNPSVSVGNLGMSYTQEEAHSSMTQLPPQTQDPQDPSNSIGLGSLHSLSAAFTSSLSTTTTLPRFHQAFQ.

The segment at methionine 1–proline 30 is disordered. Positions lysine 22–arginine 25 match the Nuclear localization signal motif. 7 consecutive C2H2-type zinc fingers follow at residues phenylalanine 34–histidine 56, tyrosine 62–histidine 86, histidine 92–histidine 114, phenylalanine 121–histidine 143, leucine 150–histidine 172, histidine 185–histidine 207, and phenylalanine 213–histidine 236. Low complexity-rich tracts occupy residues serine 366–serine 380 and threonine 455–proline 467. Disordered regions lie at residues serine 366–proline 406 and glutamine 447–glycine 474.

It belongs to the krueppel C2H2-type zinc-finger protein family. Expressed in nephroblastoma.

The protein resides in the nucleus. Its function is as follows. Transcription factor and proto-oncogene whose activation results in up-regulation of target genes, such as IGFII, leading to uncontrolled cell proliferation. The chain is Zinc finger protein PLAG1 (PLAG1) from Gallus gallus (Chicken).